The following is a 210-amino-acid chain: Thioredoxin-like 3-1, chloroplastic (210 aa).

The Thioredoxin domain maps to 81–210 (WRLKAFWSNI…EVRELINKFV (130 aa)). Active-site nucleophile residues include Cys-130 and Cys-133. Cysteines 130 and 133 form a disulfide.

Belongs to the thioredoxin family.

The protein localises to the plastid. Its subcellular location is the chloroplast stroma. Probable thiol-disulfide oxidoreductase that may participate in various redox reactions. This Arabidopsis thaliana (Mouse-ear cress) protein is Thioredoxin-like 3-1, chloroplastic (WCRKC1).